The primary structure comprises 274 residues: MTSAPPRWTTAELAEDAATSAAQFRTERLAVTDSWGTHYNQARGKFELLFKKLSDLNPEAITDDNLAEAYGLGLGEALRYLAGPPISDDDLQVIADVESIAPGVLKKNAEALRKVFGVIERVIDPHRFPWMETGGMPTEQQREAALLASSVLLAAQRIATERRNEGKDNQETMVKDYLRTLGFTEAPAAAINTIVKGPQAMQFCAECQLGERKADVVVRLHDTRLMAIECKVSNSSTNSVKRLNNDAAVKAEYWIKQFGTAQVVPSRSLVSSRY.

The enzyme catalyses Endonucleolytic cleavage of DNA to give specific double-stranded fragments with terminal 5'-phosphates.. Its function is as follows. A P subtype restriction enzyme that recognizes the double-stranded sequence 5'-GTCGAC-3' and cleaves after G-1. This is Type II restriction enzyme XamI (xamIR) from Xanthomonas campestris pv. amaranthicola.